Here is a 429-residue protein sequence, read N- to C-terminus: Proton extrusion protein PxcA (429 aa).

The segment at 139 to 161 (LNGPEAPQTNGDRPDNKPKVETV) is disordered. Positions 150–161 (DRPDNKPKVETV) are enriched in basic and acidic residues. 4 consecutive transmembrane segments (helical) span residues 211–231 (FLLT…IAIT), 306–326 (AYEN…ILLI), 353–373 (LIIL…WEII), and 389–409 (FNFL…KYWI).

Belongs to the CemA family.

It localises to the cell inner membrane. Required for H(+) efflux immediately after light irradiation to form a rapid H(+) concentration gradient across the thylakoid membranes. Together with PxcL, contributes to transient H(+) uptake following dark to light transition. This chain is Proton extrusion protein PxcA, found in Picosynechococcus sp. (strain ATCC 27264 / PCC 7002 / PR-6) (Agmenellum quadruplicatum).